Reading from the N-terminus, the 539-residue chain is MSSELQTEIQEAVEKRRNFAIISHPDAGKTTLTEKLLLYGGAIHQAGAVKARRDQRKATSDWMEMEKQRGISITSTVLQFEYRNFQINLLDTPGHQDFSEDTYRTLAAADNAVMLIDAAKGLEPQTRKLFEVCRLRGLPIFTFINKLDRPTREPLELLDEIEQELGLKTYAVNWPIGTGDRFKGVFDRRHQGIHLFERRAHGSQQAQETAIKLGDPKIEAHLEQELYYQLKEELEILQELGGDLDLKELHDGQITPVFFGSAMTNFGVQLFLEAFLEYALQPEGRNSSVGVVDPTHPEFSGFVFKLQANMDPKHRDRVAFVRVCTGKFEKDMTVSHARTGKTVRLSRPQKLFAQDRESIEEAYGGDVIGLNNPGVFAIGDTIYSGTKLEYEGIPCFSPEIFAYLKNPNPSKFKQFQKGIQELREEGAIQIMYSTDDFKRDPILAAVGQLQFEVVQFRMLSEYGVETNLEPLPYSVARWVTGGWTALEKAGRIFNSMTVKDNWDRPVLLFKNEWNLNQVKADKPELGLSSTAPVGSGINE.

The tr-type G domain maps to 14–283 (EKRRNFAIIS…AFLEYALQPE (270 aa)). GTP contacts are provided by residues 23–30 (SHPDAGKT), 91–95 (DTPGH), and 145–148 (NKLD).

The protein belongs to the TRAFAC class translation factor GTPase superfamily. Classic translation factor GTPase family. PrfC subfamily.

It is found in the cytoplasm. Its function is as follows. Increases the formation of ribosomal termination complexes and stimulates activities of RF-1 and RF-2. It binds guanine nucleotides and has strong preference for UGA stop codons. It may interact directly with the ribosome. The stimulation of RF-1 and RF-2 is significantly reduced by GTP and GDP, but not by GMP. The protein is Peptide chain release factor 3 of Rippkaea orientalis (strain PCC 8801 / RF-1) (Cyanothece sp. (strain PCC 8801)).